The sequence spans 100 residues: Small ribosomal subunit protein uS14c (100 aa).

Over residues 1-10 the composition is skewed to basic and acidic residues; it reads MARKGLIERE. A disordered region spans residues 1–29; that stretch reads MARKGLIEREKKRKKLEQKYHSIRGSSKK.

It belongs to the universal ribosomal protein uS14 family. As to quaternary structure, part of the 30S ribosomal subunit.

Its subcellular location is the plastid. It localises to the chloroplast. Binds 16S rRNA, required for the assembly of 30S particles. This chain is Small ribosomal subunit protein uS14c, found in Acorus calamus (Sweet flag).